Reading from the N-terminus, the 909-residue chain is Golgin subfamily A member 6-like protein 2 (909 aa).

Positions 1–11 (MWPQPHLPPHP) are enriched in pro residues. 5 disordered regions span residues 1 to 88 (MWPQ…ASHQ), 300 to 362 (ERLR…EQEE), 381 to 408 (QEKQ…RLRE), 425 to 494 (KMRE…QRLP), and 524 to 909 (EEMW…QSSL). Residues 13-31 (MSEKTRQNKLAEAKKKFTD) are compositionally biased toward basic and acidic residues. Positions 53-77 (NNGTNPETTTSEGCHSPEDTQQNRA) are enriched in polar residues. Residues 78 to 88 (QLKEEKKASHQ) show a composition bias toward basic and acidic residues. The stretch at 192 to 526 (HKKADRYIEE…EEKIRDQEEM (335 aa)) forms a coiled coil. 2 stretches are compositionally biased toward basic and acidic residues: residues 425 to 478 (KMRE…KQEE) and 524 to 542 (EEMW…MREQ). Positions 607–620 (AGGEEDAGAGEEDM) are enriched in acidic residues. Composition is skewed to gly residues over residues 641–654 (GGGG…GEDA) and 676–689 (GAGG…GEDV). Residues 692–719 (GRRRCGSSRGCRNRRRSCGNTRRCRSRR) are compositionally biased toward basic residues. A compositionally biased stretch (low complexity) spans 746-755 (AGAEDVAAGG). Positions 757-766 (DAGEEEDAGG) are enriched in acidic residues. Positions 791–871 (GAGGEDVGAG…AGGEDVGAGG (81 aa)) are enriched in gly residues. A compositionally biased stretch (basic and acidic residues) spans 872-892 (DAREGGEDTRSEREDAGEAAR).

Belongs to the GOLGA6 family.

This is Golgin subfamily A member 6-like protein 2 (GOLGA6L2) from Homo sapiens (Human).